Consider the following 766-residue polypeptide: Serine/threonine-protein kinase DCLK2 (766 aa).

A disordered region spans residues 1–45 (MASTRSIELEHFEERDKRPRPGSRRGAPSSSGGSSSSGPKGNGLI). The segment covering 7 to 19 (IELEHFEERDKRP) has biased composition (basic and acidic residues). Low complexity predominate over residues 24 to 39 (RRGAPSSSGGSSSSGP). Thr61 is modified (phosphothreonine). Doublecortin domains follow at residues 72–158 (KKAR…VDYT) and 197–280 (KLVT…AQDD). 2 stretches are compositionally biased toward low complexity: residues 300-312 (AVKYSGSKSPGPS) and 324-347 (TPSSQLSTPKSTKSSSSSPTSPGS). Residues 300-378 (AVKYSGSKSP…ELDRCISPEG (79 aa)) form a disordered region. Ser362 is modified (phosphoserine). The region spanning 394–651 (YKIGKVIGDG…AGQILSHPWV (258 aa)) is the Protein kinase domain. ATP-binding positions include 400–408 (IGDGNFAVV) and Lys423. Residue Asp515 is the Proton acceptor of the active site. The residue at position 647 (Ser647) is a Phosphoserine. Phosphothreonine is present on Thr666. The interval 707 to 766 (CQDSGRPGMEPISPVPPSVEEIPVPGEAVPAPTPPESPTPHPPPAAPGGERAGTWRRHRD) is disordered. The segment covering 724 to 736 (SVEEIPVPGEAVP) has biased composition (low complexity). Positions 737–752 (APTPPESPTPHPPPAA) are enriched in pro residues.

Belongs to the protein kinase superfamily. CAMK Ser/Thr protein kinase family. CaMK subfamily. Binds to and stabilizes microtubules. Interacts with MAPK8IP1/JIP-1, MAPK8IP2/JIP-2, MAPK9/JNK2, PPP1R9B/NEURABIN-2 and actin. Post-translationally, autophosphorylated. As to expression, expressed in the brain, heart and eyes.

It is found in the cytoplasm. The protein resides in the cytoskeleton. The catalysed reaction is L-seryl-[protein] + ATP = O-phospho-L-seryl-[protein] + ADP + H(+). It carries out the reaction L-threonyl-[protein] + ATP = O-phospho-L-threonyl-[protein] + ADP + H(+). Its function is as follows. Protein kinase with a significantly reduced C(a2+)/CAM affinity and dependence compared to other members of the CaMK family. May play a role in the down-regulation of CRE-dependent gene activation probably by phosphorylation of the CREB coactivator CRTC2/TORC2 and the resulting retention of TORC2 in the cytoplasm. This is Serine/threonine-protein kinase DCLK2 (DCLK2) from Homo sapiens (Human).